A 529-amino-acid chain; its full sequence is MEAYVLSLSDVLFNILFIGVCILSVLLLISHALKYIIGDSKEKKLFNQRLEQIKNQQPLEPTKYQDIQTICKTLKESYSTNALRHLDARKEVLYCLYRMVLDNKQAISNAIREDLHRDVGMCVAEVNSVIHEINFLRKNLNKYLKRKQVPTVCAQLFGKSFVEREPYGCVCVISPWNFPANLSLIPCAGALACGNTVFLKMSKYSMATSKLIAELCDKYIPSEYLRCEYLTGREAIQECCSASFDYYFFTGSTYVGKLINQAAAEKMVPATLELGGKNPAIVDKSVNLKVAAKRIAWAKSINAGQICVCVDHVFVPRSIKNEFCEAVKNSFIKFFGEDQKKSEDFGRIITKSAAKKMKEIIDQSDVYYGGEVDIENKYVQPTILQNVKIDDLCMKEEIFGPILPVIEYDTLDEVFEMVKQHPNPLACYVFTEDNDMFEHVIANINSGAIYNNDSIVHLLNPNLPFGGNCQSGIGCYHGKYTFDTFSRPRAVCNGHTSFDLSLKDWPFTSFQSWAVDRMAASEIPVVSYL.

251–256 (GSTYVG) contributes to the NAD(+) binding site. Catalysis depends on residues Glu273 and Cys307.

The protein belongs to the aldehyde dehydrogenase family.

It catalyses the reaction an aldehyde + NAD(+) + H2O = a carboxylate + NADH + 2 H(+). This Entamoeba histolytica (strain ATCC 30459 / HM-1:IMSS / ABRM) protein is Aldehyde dehydrogenase 1.